A 129-amino-acid chain; its full sequence is Small ribosomal subunit protein uS11 (129 aa).

Belongs to the universal ribosomal protein uS11 family. In terms of assembly, part of the 30S ribosomal subunit. Interacts with proteins S7 and S18. Binds to IF-3.

Functionally, located on the platform of the 30S subunit, it bridges several disparate RNA helices of the 16S rRNA. Forms part of the Shine-Dalgarno cleft in the 70S ribosome. In Zymomonas mobilis subsp. mobilis (strain ATCC 31821 / ZM4 / CP4), this protein is Small ribosomal subunit protein uS11.